The primary structure comprises 187 residues: Elongation factor P (187 aa).

This sequence belongs to the elongation factor P family.

The protein resides in the cytoplasm. It functions in the pathway protein biosynthesis; polypeptide chain elongation. In terms of biological role, involved in peptide bond synthesis. Stimulates efficient translation and peptide-bond synthesis on native or reconstituted 70S ribosomes in vitro. Probably functions indirectly by altering the affinity of the ribosome for aminoacyl-tRNA, thus increasing their reactivity as acceptors for peptidyl transferase. This Fusobacterium nucleatum subsp. nucleatum (strain ATCC 25586 / DSM 15643 / BCRC 10681 / CIP 101130 / JCM 8532 / KCTC 2640 / LMG 13131 / VPI 4355) protein is Elongation factor P.